The following is a 104-amino-acid chain: Large ribosomal subunit protein uL24 (104 aa).

Belongs to the universal ribosomal protein uL24 family. As to quaternary structure, part of the 50S ribosomal subunit.

In terms of biological role, one of two assembly initiator proteins, it binds directly to the 5'-end of the 23S rRNA, where it nucleates assembly of the 50S subunit. Functionally, one of the proteins that surrounds the polypeptide exit tunnel on the outside of the subunit. The protein is Large ribosomal subunit protein uL24 of Bradyrhizobium sp. (strain ORS 278).